A 775-amino-acid polypeptide reads, in one-letter code: Phenylalanine--tRNA ligase beta subunit (775 aa).

Residues G39–N147 form the tRNA-binding domain. Positions Y394–S470 constitute a B5 domain. Mg(2+) is bound by residues D448, D454, E457, and E458. One can recognise an FDX-ACB domain in the interval A681–R774.

The protein belongs to the phenylalanyl-tRNA synthetase beta subunit family. Type 1 subfamily. Tetramer of two alpha and two beta subunits. It depends on Mg(2+) as a cofactor.

The protein localises to the cytoplasm. It carries out the reaction tRNA(Phe) + L-phenylalanine + ATP = L-phenylalanyl-tRNA(Phe) + AMP + diphosphate + H(+). In Aquifex aeolicus (strain VF5), this protein is Phenylalanine--tRNA ligase beta subunit (pheT).